We begin with the raw amino-acid sequence, 787 residues long: Bifunctional dethiobiotin synthetase/adenosylmethionine-8-amino-7-oxononanoate aminotransferase (787 aa).

Residue 23–28 coordinates ATP; that stretch reads DVGKTI. Thr27 provides a ligand contact to Mg(2+). Substrate is bound at residue Thr54. Asp61 and Glu123 together coordinate Mg(2+). ATP-binding positions include 123–126 and 184–185; these read ETAG and KD. A (8S)-8-amino-7-oxononanoate-binding site is contributed by 323 to 324; the sequence is WW. 384–385 provides a ligand contact to pyridoxal 5'-phosphate; sequence GS. Tyr421 is a (8S)-8-amino-7-oxononanoate binding site. Asp582 contacts pyridoxal 5'-phosphate. The (8S)-8-amino-7-oxononanoate site is built by Lys611 and Gly645. Position 646 to 647 (646 to 647) interacts with pyridoxal 5'-phosphate; it reads HS. (8S)-8-amino-7-oxononanoate is bound at residue Arg756.

It in the N-terminal section; belongs to the dethiobiotin synthetase family. This sequence in the C-terminal section; belongs to the class-III pyridoxal-phosphate-dependent aminotransferase family. BioA subfamily. Homodimer. Requires Mg(2+) as cofactor. Pyridoxal 5'-phosphate serves as cofactor.

The protein localises to the mitochondrion matrix. The enzyme catalyses (7R,8S)-7,8-diammoniononanoate + CO2 + ATP = (4R,5S)-dethiobiotin + ADP + phosphate + 3 H(+). It carries out the reaction (8S)-8-amino-7-oxononanoate + S-adenosyl-L-methionine = S-adenosyl-4-methylsulfanyl-2-oxobutanoate + (7R,8S)-7,8-diammoniononanoate. It participates in cofactor biosynthesis; biotin biosynthesis; biotin from 7,8-diaminononanoate: step 1/2. The protein operates within cofactor biosynthesis; biotin biosynthesis; 7,8-diaminononanoate from 8-amino-7-oxononanoate (SAM route): step 1/1. Its function is as follows. Bifunctional enzyme; part of the cluster involved in the biosynthesis of biotin (also known as vitamin B8 or vitamin H), a water-soluble vitamin that functions as a prosthetic group of many carboxylases, such as acetyl-CoA carboxylase and pyruvate carboxylase. Catalyzes a mechanistically unusual reaction, the ATP-dependent insertion of CO2 between the N7 and N8 nitrogen atoms of 7,8-diaminopelargonic acid (DAPA) to form an ureido ring. Also catalyzes the transfer of the alpha-amino group from S-adenosyl-L-methionine (SAM) to 7-keto-8-aminopelargonic acid (KAPA) to form 7,8-diaminopelargonic acid (DAPA). It is the only animotransferase known to utilize SAM as an amino donor. This Emericella nidulans (strain FGSC A4 / ATCC 38163 / CBS 112.46 / NRRL 194 / M139) (Aspergillus nidulans) protein is Bifunctional dethiobiotin synthetase/adenosylmethionine-8-amino-7-oxononanoate aminotransferase.